Consider the following 396-residue polypeptide: Ribosomal RNA large subunit methyltransferase I (396 aa).

A PUA domain is found at 2–79; sequence AIRIKLKPGR…REEEIDRAFF (78 aa).

Belongs to the methyltransferase superfamily. RlmI family.

The protein resides in the cytoplasm. The enzyme catalyses cytidine(1962) in 23S rRNA + S-adenosyl-L-methionine = 5-methylcytidine(1962) in 23S rRNA + S-adenosyl-L-homocysteine + H(+). Functionally, specifically methylates the cytosine at position 1962 (m5C1962) of 23S rRNA. The protein is Ribosomal RNA large subunit methyltransferase I of Shewanella putrefaciens (strain CN-32 / ATCC BAA-453).